The sequence spans 185 residues: Probable chorismate pyruvate-lyase (185 aa).

Residues Arg-84, Leu-122, and Glu-178 each coordinate substrate.

The protein belongs to the UbiC family.

It localises to the cytoplasm. It carries out the reaction chorismate = 4-hydroxybenzoate + pyruvate. Its pathway is cofactor biosynthesis; ubiquinone biosynthesis. Functionally, removes the pyruvyl group from chorismate, with concomitant aromatization of the ring, to provide 4-hydroxybenzoate (4HB) for the ubiquinone pathway. The polypeptide is Probable chorismate pyruvate-lyase (Hydrogenovibrio crunogenus (strain DSM 25203 / XCL-2) (Thiomicrospira crunogena)).